A 278-amino-acid polypeptide reads, in one-letter code: Acetyl-coenzyme A carboxylase carboxyl transferase subunit beta (278 aa).

The region spanning 23–278 (LWSKCDSCGA…QLIKLLGHMK (256 aa)) is the CoA carboxyltransferase N-terminal domain. Positions 27, 30, 46, and 49 each coordinate Zn(2+). The C4-type zinc-finger motif lies at 27-49 (CDSCGAALHKKQLEDHLYTCPHC).

This sequence belongs to the AccD/PCCB family. In terms of assembly, acetyl-CoA carboxylase is a heterohexamer composed of biotin carboxyl carrier protein (AccB), biotin carboxylase (AccC) and two subunits each of ACCase subunit alpha (AccA) and ACCase subunit beta (AccD). Zn(2+) is required as a cofactor.

Its subcellular location is the cytoplasm. It carries out the reaction N(6)-carboxybiotinyl-L-lysyl-[protein] + acetyl-CoA = N(6)-biotinyl-L-lysyl-[protein] + malonyl-CoA. The protein operates within lipid metabolism; malonyl-CoA biosynthesis; malonyl-CoA from acetyl-CoA: step 1/1. Functionally, component of the acetyl coenzyme A carboxylase (ACC) complex. Biotin carboxylase (BC) catalyzes the carboxylation of biotin on its carrier protein (BCCP) and then the CO(2) group is transferred by the transcarboxylase to acetyl-CoA to form malonyl-CoA. This chain is Acetyl-coenzyme A carboxylase carboxyl transferase subunit beta, found in Chlorobaculum tepidum (strain ATCC 49652 / DSM 12025 / NBRC 103806 / TLS) (Chlorobium tepidum).